The primary structure comprises 543 residues: Protein pbn1 (543 aa).

Residues 1-503 (MRRRITFVQR…KGFFQSKAIE (503 aa)) are Lumenal-facing. A glycan (N-linked (GlcNAc...) asparagine) is linked at Asn409. The helical transmembrane segment at 504-524 (LGTMIVIGLGSLWVLWKLGAI) threads the bilayer. The Cytoplasmic portion of the chain corresponds to 525 to 543 (AWSSGTRPQRKSTKQKKSE).

Belongs to the PIGX family.

The protein resides in the endoplasmic reticulum membrane. The protein operates within glycolipid biosynthesis; glycosylphosphatidylinositol-anchor biosynthesis. Required for proper folding and/or the stability of a subset of proteins in the endoplasmic reticulum. Component of glycosylphosphatidylinositol-mannosyltransferase 1 which transfers the first of the 4 mannoses in the GPI-anchor precursors during GPI-anchor biosynthesis. Probably acts by stabilizing the mannosyltransferase gpi14. The protein is Protein pbn1 (pbn1) of Aspergillus oryzae (strain ATCC 42149 / RIB 40) (Yellow koji mold).